The following is a 279-amino-acid chain: Protease HtpX homolog (279 aa).

The next 2 helical transmembrane spans lie at 4-24 (IFLF…VLAV) and 34-54 (GSLL…SLLM). His140 lines the Zn(2+) pocket. Glu141 is an active-site residue. His144 is a binding site for Zn(2+). 2 helical membrane-spanning segments follow: residues 155 to 175 (LIQG…ANLI) and 189 to 209 (FLVS…IVMW). Glu215 lines the Zn(2+) pocket.

It belongs to the peptidase M48B family. Zn(2+) serves as cofactor.

It is found in the cell inner membrane. The chain is Protease HtpX homolog from Neisseria gonorrhoeae (strain ATCC 700825 / FA 1090).